Consider the following 615-residue polypeptide: 1-deoxy-D-xylulose-5-phosphate synthase (615 aa).

Residues His-72 and 111–113 (GHS) contribute to the thiamine diphosphate site. Position 142 (Asp-142) interacts with Mg(2+). Residues 143–144 (GA), Asn-171, Tyr-278, and Glu-360 each bind thiamine diphosphate. Residue Asn-171 participates in Mg(2+) binding.

Belongs to the transketolase family. DXPS subfamily. As to quaternary structure, homodimer. It depends on Mg(2+) as a cofactor. Requires thiamine diphosphate as cofactor.

It carries out the reaction D-glyceraldehyde 3-phosphate + pyruvate + H(+) = 1-deoxy-D-xylulose 5-phosphate + CO2. It functions in the pathway metabolic intermediate biosynthesis; 1-deoxy-D-xylulose 5-phosphate biosynthesis; 1-deoxy-D-xylulose 5-phosphate from D-glyceraldehyde 3-phosphate and pyruvate: step 1/1. Functionally, catalyzes the acyloin condensation reaction between C atoms 2 and 3 of pyruvate and glyceraldehyde 3-phosphate to yield 1-deoxy-D-xylulose-5-phosphate (DXP). The polypeptide is 1-deoxy-D-xylulose-5-phosphate synthase (Campylobacter jejuni subsp. jejuni serotype O:23/36 (strain 81-176)).